The chain runs to 231 residues: Flagellar L-ring protein (231 aa).

The signal sequence occupies residues 1–18; it reads MNRYVSVLALSGIAVLAG. Cys-19 carries N-palmitoyl cysteine lipidation. A lipid anchor (S-diacylglycerol cysteine) is attached at Cys-19.

Belongs to the FlgH family. In terms of assembly, the basal body constitutes a major portion of the flagellar organelle and consists of four rings (L,P,S, and M) mounted on a central rod.

It localises to the cell outer membrane. It is found in the bacterial flagellum basal body. Its function is as follows. Assembles around the rod to form the L-ring and probably protects the motor/basal body from shearing forces during rotation. This chain is Flagellar L-ring protein, found in Pseudomonas fluorescens (strain SBW25).